The primary structure comprises 30 residues: Nattererin-2 (30 aa).

As to expression, expressed by the skin glands.

It localises to the secreted. Functionally, probably has antibacterial activity. The sequence is that of Nattererin-2 from Physalaemus nattereri (Cuyaba dwarf frog).